The sequence spans 132 residues: Hemoglobin subunit beta-1 (132 aa).

Residues 1–132 (WSKIDIDVCG…VVSALGRQYH (132 aa)) enclose the Globin domain. Heme b-binding residues include His-49 and His-78.

Belongs to the globin family. In terms of assembly, hb 1 is a heterotetramer of two alpha-1 and two beta-1 chains. Hb 2 is a heterotetramer of two alpha-2 and two beta-1 chains. As to expression, red blood cells.

Its function is as follows. Involved in oxygen transport from gills to the various peripheral tissues. This is Hemoglobin subunit beta-1 (hbb1) from Arctogadus glacialis (Arctic cod).